A 439-amino-acid chain; its full sequence is Maintenance of mitochondrial morphology protein 1 (439 aa).

At 1–76 (MSQDLIETTA…NGNTWSFTQG (76 aa)) the chain is on the lumenal side. A helical membrane pass occupies residues 77–97 (LVIGQVSVIFIIIVFVKFFVF). Over 98–439 (ADSSSHIPTK…TPGEYVNSNI (342 aa)) the chain is Cytoplasmic. Disordered regions lie at residues 125-145 (KHSN…SLDS), 309-336 (MNGY…DGGT), and 405-425 (REPV…GTSA). The SMP-LTD domain maps to 165-395 (ASESLDWFNV…EPRFQVVRLP (231 aa)). Low complexity-rich tracts occupy residues 315–326 (ENANGDGASSSN) and 410–424 (KKTT…NGTS).

The protein belongs to the MMM1 family. As to quaternary structure, homodimer. Component of the ER-mitochondria encounter structure (ERMES) or MDM complex, composed of MMM1, MDM10, MDM12 and MDM34. An MMM1 homodimer associates with one molecule of MDM12 on each side in a pairwise head-to-tail manner, and the SMP-LTD domains of MMM1 and MDM12 generate a continuous hydrophobic tunnel for phospholipid trafficking.

Its subcellular location is the endoplasmic reticulum membrane. Component of the ERMES/MDM complex, which serves as a molecular tether to connect the endoplasmic reticulum (ER) and mitochondria. Components of this complex are involved in the control of mitochondrial shape and protein biogenesis, and function in nonvesicular lipid trafficking between the ER and mitochondria. The MDM12-MMM1 subcomplex functions in the major beta-barrel assembly pathway that is responsible for biogenesis of all outer membrane beta-barrel proteins, and acts in a late step after the SAM complex. The MDM10-MDM12-MMM1 subcomplex further acts in the TOM40-specific pathway after the action of the MDM12-MMM1 complex. Essential for establishing and maintaining the structure of mitochondria and maintenance of mtDNA nucleoids. The protein is Maintenance of mitochondrial morphology protein 1 of Candida albicans (strain SC5314 / ATCC MYA-2876) (Yeast).